The chain runs to 142 residues: Large ribosomal subunit protein uL13 (142 aa).

It belongs to the universal ribosomal protein uL13 family. Part of the 50S ribosomal subunit.

In terms of biological role, this protein is one of the early assembly proteins of the 50S ribosomal subunit, although it is not seen to bind rRNA by itself. It is important during the early stages of 50S assembly. This is Large ribosomal subunit protein uL13 from Laribacter hongkongensis (strain HLHK9).